Reading from the N-terminus, the 176-residue chain is Protein GrpE (176 aa).

A disordered region spans residues 1–28 (MSEQKQEFENENAENSEHLQDENLQNIE).

The protein belongs to the GrpE family. In terms of assembly, homodimer.

The protein localises to the cytoplasm. Participates actively in the response to hyperosmotic and heat shock by preventing the aggregation of stress-denatured proteins, in association with DnaK and GrpE. It is the nucleotide exchange factor for DnaK and may function as a thermosensor. Unfolded proteins bind initially to DnaJ; upon interaction with the DnaJ-bound protein, DnaK hydrolyzes its bound ATP, resulting in the formation of a stable complex. GrpE releases ADP from DnaK; ATP binding to DnaK triggers the release of the substrate protein, thus completing the reaction cycle. Several rounds of ATP-dependent interactions between DnaJ, DnaK and GrpE are required for fully efficient folding. The polypeptide is Protein GrpE (Campylobacter jejuni subsp. jejuni serotype O:2 (strain ATCC 700819 / NCTC 11168)).